The primary structure comprises 102 residues: uncharacterized protein (102 aa).

This is an uncharacterized protein from Acidianus filamentous virus 1 (isolate United States/Yellowstone) (AFV-1).